The following is a 406-amino-acid chain: uncharacterized protein (406 aa).

It localises to the plastid. Its subcellular location is the chloroplast. This is an uncharacterized protein from Euglena gracilis.